The following is a 220-amino-acid chain: Deoxyribose-phosphate aldolase (220 aa).

Asp89 (proton donor/acceptor) is an active-site residue. Residue Lys151 is the Schiff-base intermediate with acetaldehyde of the active site. The active-site Proton donor/acceptor is Lys180.

The protein belongs to the DeoC/FbaB aldolase family. DeoC type 1 subfamily.

The protein localises to the cytoplasm. It catalyses the reaction 2-deoxy-D-ribose 5-phosphate = D-glyceraldehyde 3-phosphate + acetaldehyde. Its pathway is carbohydrate degradation; 2-deoxy-D-ribose 1-phosphate degradation; D-glyceraldehyde 3-phosphate and acetaldehyde from 2-deoxy-alpha-D-ribose 1-phosphate: step 2/2. Its function is as follows. Catalyzes a reversible aldol reaction between acetaldehyde and D-glyceraldehyde 3-phosphate to generate 2-deoxy-D-ribose 5-phosphate. This is Deoxyribose-phosphate aldolase from Thermus thermophilus (strain ATCC BAA-163 / DSM 7039 / HB27).